Consider the following 122-residue polypeptide: Double-headed protease inhibitor, submandibular gland (122 aa).

2 consecutive Kazal-like domains span residues 10–70 (GGRK…NCDI) and 71–121 (ECTQ…QCES). 6 cysteine pairs are disulfide-bonded: C16/C50, C28/C47, C36/C68, C72/C101, C79/C98, and C87/C119.

It localises to the secreted. This inhibitor is composed of two homologous actively inhibiting halves: one which inhibits trypsin, the other which inhibits elastase. The sequence is that of Double-headed protease inhibitor, submandibular gland from Meles meles (Eurasian badger).